Reading from the N-terminus, the 161-residue chain is Monooxygenase AgnL5 (161 aa).

This sequence belongs to the avfA family.

It functions in the pathway secondary metabolite biosynthesis. Functionally, monooxygenase; part of the gene cluster that mediates the biosynthesis of agnestins, dihydroxy-xanthone metabolites. The pathway begins with the assembly and cyclization of atrochrysone thioester by the non-reducing polyketide synthase Agnpks1. The atrochrysone carboxyl ACP thioesterase AgnL7 then breaks the thioester bond and releases the atrochrysone carboxylic acid as the first enzyme-free intermediate. The decarboxylase AgnL1 then catalyzes the concerted decarboxylation-elimination required to convert atochrysone carboxylic acid into emodin anthrone, which is further oxidized to emodin by the anthrone oxygenase AgnL2. Emodin then undergoes reduction catalyzed by the oxidoreductase AgnL4 to yield the dihydroquinone tautomer which is the substrate for reduction by the short chain dehydrogenase AgnL6 reduction to produce hydroxyketone, followed by AgnL8 dehydration and likely spontaneous autoxidation to chrysophanol. Baeyer-Villiger oxidation by the oxidase AgnL3 leads to monodictyphenone via cleavage of the C-10/C-10a bond of chrysophanol. Alternative cleavage at the C-4a/C-10 bond of chrysophanol also leads to the formation some cephalone F. Further conversion to agnestins A and B, requires reduction to dihydro-monodictyphenone, oxidation to agnestin C probably via an epoxide, and rearrangement to either agnestin A or agnestin B directly, although agnestin A or agnestin B can also interconvert. Within the cluster, AgnR1 is the only unassigned oxidoreductase present which could be involved in this conversion. However, AgnR1 seems not to be involved in this step, and thus genes involved in the proposed oxidation/reduction may be located elsewhere on the genome. Further agnestin A derivatives are probably formed by spontaneous decarboxylations, dehydrations and methanolysis reactions. The protein is Monooxygenase AgnL5 of Paecilomyces divaricatus (Penicillium divaricatum).